Here is a 1232-residue protein sequence, read N- to C-terminus: Protein transport protein sec-16A.1 (1232 aa).

6 disordered regions span residues 18 to 134, 172 to 193, 815 to 843, 866 to 942, 972 to 1069, and 1140 to 1232; these read GASG…SGYA, RNGF…EEDE, PVQE…KWHD, KPIA…VVPE, QPIP…PQKQ, and PHLM…QNND. Positions 26 to 37 are enriched in polar residues; it reads DWNNPYNASPPS. Residues 67-76 show a composition bias toward low complexity; it reads RPILIQPARP. Residues 78–100 are compositionally biased toward polar residues; the sequence is SQKSNRQGTGMSNGSRGLNSTFN. Positions 817–836 are enriched in polar residues; it reads QESQQHVPQPQPVENKSISS. The segment covering 896 to 914 has biased composition (low complexity); sequence SSVTVAASASRTSTLTSST. Polar residues-rich tracts occupy residues 1046-1060, 1149-1159, and 1168-1178; these read QQAT…NAKT, SNKSSTNSLRS, and YLQSGMATSQA. A compositionally biased stretch (low complexity) spans 1194-1203; the sequence is PMSFSFMPAP. Over residues 1222–1232 the composition is skewed to polar residues; that stretch reads PSESLSKQNND.

Belongs to the SEC16 family. As to quaternary structure, interacts with tfg-1 (via N-terminus); the interaction is direct and is required for both the localization of tfg-1 and to maintain the distribution of sec-16A.1 at endoplasmic reticulum exit sites (ERES).

The protein resides in the endoplasmic reticulum. Its subcellular location is the endoplasmic reticulum-Golgi intermediate compartment. Its function is as follows. Plays a role in the organization of the endoplasmic reticulum exit sites (ERES), also known as transitional endoplasmic reticulum (tER). In association with tfg-1, accumulates at ERES to positively regulate secretory cargo trafficking from the endoplasmic reticulum to the endoplasmic reticulum-Golgi intermediate compartment (ERGIC) and Golgi apparatus. The chain is Protein transport protein sec-16A.1 from Caenorhabditis elegans.